Reading from the N-terminus, the 374-residue chain is Coiled-coil domain-containing protein 89 (374 aa).

The segment at 1-38 is disordered; sequence MRAPMPQKEQAPRMDTSPPEERLEKQNEKLNNQEEEME. Threonine 16 carries the phosphothreonine modification. The span at 19–32 shows a compositional bias: basic and acidic residues; the sequence is PEERLEKQNEKLNN. A coiled-coil region spans residues 19-350; that stretch reads PEERLEKQNE…YDELRLQSEA (332 aa).

This sequence belongs to the CCDC89 family. In terms of assembly, interacts with HEY1.

It localises to the cytoplasm. The protein localises to the nucleus. This Macaca fascicularis (Crab-eating macaque) protein is Coiled-coil domain-containing protein 89 (CCDC89).